We begin with the raw amino-acid sequence, 64 residues long: Neuropeptide-like 4 (64 aa).

The signal sequence occupies residues 1–18 (MFKLLVVVFAALFAAALA). 2 consecutive propeptides follow at residues 19–40 (VPAP…EPAP) and 63–64 (YG).

It is found in the secreted. This chain is Neuropeptide-like 4 (Nplp4), found in Drosophila melanogaster (Fruit fly).